We begin with the raw amino-acid sequence, 684 residues long: Glycine--tRNA ligase beta subunit (684 aa).

It belongs to the class-II aminoacyl-tRNA synthetase family. As to quaternary structure, tetramer of two alpha and two beta subunits.

The protein localises to the cytoplasm. The catalysed reaction is tRNA(Gly) + glycine + ATP = glycyl-tRNA(Gly) + AMP + diphosphate. The polypeptide is Glycine--tRNA ligase beta subunit (Pseudomonas aeruginosa (strain UCBPP-PA14)).